Here is a 177-residue protein sequence, read N- to C-terminus: Ribosome maturation factor RimM (177 aa).

The region spanning Gly-98–Leu-171 is the PRC barrel domain.

The protein belongs to the RimM family. As to quaternary structure, binds ribosomal protein uS19.

It localises to the cytoplasm. Its function is as follows. An accessory protein needed during the final step in the assembly of 30S ribosomal subunit, possibly for assembly of the head region. Essential for efficient processing of 16S rRNA. May be needed both before and after RbfA during the maturation of 16S rRNA. It has affinity for free ribosomal 30S subunits but not for 70S ribosomes. The sequence is that of Ribosome maturation factor RimM from Bdellovibrio bacteriovorus (strain ATCC 15356 / DSM 50701 / NCIMB 9529 / HD100).